We begin with the raw amino-acid sequence, 356 residues long: Uroporphyrinogen decarboxylase (356 aa).

Substrate-binding positions include 27 to 31, aspartate 77, tyrosine 154, serine 209, and histidine 327; that span reads RQAGR.

This sequence belongs to the uroporphyrinogen decarboxylase family. In terms of assembly, homodimer.

The protein localises to the cytoplasm. The catalysed reaction is uroporphyrinogen III + 4 H(+) = coproporphyrinogen III + 4 CO2. It functions in the pathway porphyrin-containing compound metabolism; protoporphyrin-IX biosynthesis; coproporphyrinogen-III from 5-aminolevulinate: step 4/4. In terms of biological role, catalyzes the decarboxylation of four acetate groups of uroporphyrinogen-III to yield coproporphyrinogen-III. This chain is Uroporphyrinogen decarboxylase, found in Aromatoleum aromaticum (strain DSM 19018 / LMG 30748 / EbN1) (Azoarcus sp. (strain EbN1)).